Consider the following 474-residue polypeptide: L-arabinose isomerase 2 (474 aa).

Mn(2+) contacts are provided by Glu-306, Glu-331, His-348, and His-447.

The protein belongs to the arabinose isomerase family. Mn(2+) serves as cofactor.

It catalyses the reaction beta-L-arabinopyranose = L-ribulose. Its pathway is carbohydrate degradation; L-arabinose degradation via L-ribulose; D-xylulose 5-phosphate from L-arabinose (bacterial route): step 1/3. Its function is as follows. Catalyzes the conversion of L-arabinose to L-ribulose. In Bacillus licheniformis (strain ATCC 14580 / DSM 13 / JCM 2505 / CCUG 7422 / NBRC 12200 / NCIMB 9375 / NCTC 10341 / NRRL NRS-1264 / Gibson 46), this protein is L-arabinose isomerase 2.